Here is a 348-residue protein sequence, read N- to C-terminus: Quinone oxidoreductase-like protein 1 (348 aa).

This sequence belongs to the zinc-containing alcohol dehydrogenase family. Quinone oxidoreductase subfamily. As to quaternary structure, component of the FERRY complex composed of five subunits, TBCK, PPP1R21, FERRY3, CRYZL1 and GATD1 with a ratio of 1:2:1:2:4, respectively.

It is found in the early endosome. Its function is as follows. Component of the FERRY complex (Five-subunit Endosomal Rab5 and RNA/ribosome intermediary). The FERRY complex directly interacts with mRNAs and RAB5A, and functions as a RAB5A effector involved in the localization and the distribution of specific mRNAs most likely by mediating their endosomal transport. The complex recruits mRNAs and ribosomes to early endosomes through direct mRNA-interaction. The chain is Quinone oxidoreductase-like protein 1 (Cryzl1) from Mus musculus (Mouse).